Here is a 142-residue protein sequence, read N- to C-terminus: Large ribosomal subunit protein uL13 (142 aa).

The protein belongs to the universal ribosomal protein uL13 family. As to quaternary structure, part of the 50S ribosomal subunit.

In terms of biological role, this protein is one of the early assembly proteins of the 50S ribosomal subunit, although it is not seen to bind rRNA by itself. It is important during the early stages of 50S assembly. The protein is Large ribosomal subunit protein uL13 of Vibrio parahaemolyticus serotype O3:K6 (strain RIMD 2210633).